Consider the following 713-residue polypeptide: P-loop NTPase domain-containing protein LPA1 homolog (713 aa).

Disordered stretches follow at residues 218–249 (AKKRSGISTTSTIDFDKTRPLNDKPDGKPIGK), 504–575 (TSQA…EDLS), and 650–713 (LDSP…APDK). A compositionally biased stretch (basic and acidic residues) spans 231 to 246 (DFDKTRPLNDKPDGKP). Positions 504 to 531 (TSQAGSVNESWDNANEGTGSHVPSSSGS) are enriched in polar residues. The segment covering 533–544 (KKLDGHCKEIKE) has biased composition (basic and acidic residues). Acidic residues predominate over residues 551-562 (SDDDEEEEEEAA). The segment covering 656–668 (ARSSSALPISASS) has biased composition (low complexity).

Its function is as follows. Required for the accumulation of phytic acid in seeds. Phytic acid is the primary storage form of phosphorus in cereal grains and other plant seeds. The chain is P-loop NTPase domain-containing protein LPA1 homolog from Oryza sativa subsp. japonica (Rice).